A 334-amino-acid chain; its full sequence is Formamidase (334 aa).

The CN hydrolase domain occupies 14–260 (FLVAAIQFPV…WEIVTGEIYP (247 aa)). Glu60 (proton acceptor) is an active-site residue. Lys133 serves as the catalytic Proton donor. Cys166 acts as the Nucleophile in catalysis.

This sequence belongs to the carbon-nitrogen hydrolase superfamily. Aliphatic amidase family.

The catalysed reaction is formamide + H2O = formate + NH4(+). Functionally, is an aliphatic amidase with a restricted substrate specificity, as it only hydrolyzes formamide. This is Formamidase from Helicobacter pylori (strain P12).